A 214-amino-acid polypeptide reads, in one-letter code: Pyridoxine/pyridoxamine 5'-phosphate oxidase (214 aa).

Residues 8 to 11 and Lys66 each bind substrate; that span reads RINY. FMN-binding positions include 61–66, 76–77, Arg82, Lys83, and Gln105; these read RIVLIK and FT. Residues Tyr123, Arg127, and Ser131 each contribute to the substrate site. FMN contacts are provided by residues 140-141 and Trp184; that span reads QS. 190–192 contacts substrate; the sequence is RLH. Arg194 is an FMN binding site.

It belongs to the pyridoxamine 5'-phosphate oxidase family. In terms of assembly, homodimer. It depends on FMN as a cofactor.

The enzyme catalyses pyridoxamine 5'-phosphate + O2 + H2O = pyridoxal 5'-phosphate + H2O2 + NH4(+). It catalyses the reaction pyridoxine 5'-phosphate + O2 = pyridoxal 5'-phosphate + H2O2. It participates in cofactor metabolism; pyridoxal 5'-phosphate salvage; pyridoxal 5'-phosphate from pyridoxamine 5'-phosphate: step 1/1. Its pathway is cofactor metabolism; pyridoxal 5'-phosphate salvage; pyridoxal 5'-phosphate from pyridoxine 5'-phosphate: step 1/1. Its function is as follows. Catalyzes the oxidation of either pyridoxine 5'-phosphate (PNP) or pyridoxamine 5'-phosphate (PMP) into pyridoxal 5'-phosphate (PLP). The chain is Pyridoxine/pyridoxamine 5'-phosphate oxidase from Burkholderia orbicola (strain MC0-3).